A 37-amino-acid polypeptide reads, in one-letter code: Large ribosomal subunit protein bL36B (37 aa).

The protein belongs to the bacterial ribosomal protein bL36 family.

The protein is Large ribosomal subunit protein bL36B of Aeromonas salmonicida (strain A449).